The chain runs to 193 residues: Peptidyl-tRNA hydrolase (193 aa).

Tyrosine 17 is a binding site for tRNA. Histidine 22 acts as the Proton acceptor in catalysis. TRNA-binding residues include tyrosine 69, asparagine 71, and asparagine 117.

The protein belongs to the PTH family. As to quaternary structure, monomer.

The protein localises to the cytoplasm. It carries out the reaction an N-acyl-L-alpha-aminoacyl-tRNA + H2O = an N-acyl-L-amino acid + a tRNA + H(+). Functionally, hydrolyzes ribosome-free peptidyl-tRNAs (with 1 or more amino acids incorporated), which drop off the ribosome during protein synthesis, or as a result of ribosome stalling. In terms of biological role, catalyzes the release of premature peptidyl moieties from peptidyl-tRNA molecules trapped in stalled 50S ribosomal subunits, and thus maintains levels of free tRNAs and 50S ribosomes. This Leifsonia xyli subsp. xyli (strain CTCB07) protein is Peptidyl-tRNA hydrolase.